The following is a 181-amino-acid chain: ATP synthase subunit delta (181 aa).

Belongs to the ATPase delta chain family. F-type ATPases have 2 components, F(1) - the catalytic core - and F(0) - the membrane proton channel. F(1) has five subunits: alpha(3), beta(3), gamma(1), delta(1), epsilon(1). F(0) has three main subunits: a(1), b(2) and c(10-14). The alpha and beta chains form an alternating ring which encloses part of the gamma chain. F(1) is attached to F(0) by a central stalk formed by the gamma and epsilon chains, while a peripheral stalk is formed by the delta and b chains.

The protein localises to the cell inner membrane. In terms of biological role, f(1)F(0) ATP synthase produces ATP from ADP in the presence of a proton or sodium gradient. F-type ATPases consist of two structural domains, F(1) containing the extramembraneous catalytic core and F(0) containing the membrane proton channel, linked together by a central stalk and a peripheral stalk. During catalysis, ATP synthesis in the catalytic domain of F(1) is coupled via a rotary mechanism of the central stalk subunits to proton translocation. Its function is as follows. This protein is part of the stalk that links CF(0) to CF(1). It either transmits conformational changes from CF(0) to CF(1) or is implicated in proton conduction. The sequence is that of ATP synthase subunit delta from Desulfotalea psychrophila (strain LSv54 / DSM 12343).